The primary structure comprises 101 residues: NADH-quinone oxidoreductase subunit K (101 aa).

Helical transmembrane passes span 4 to 24 (LAHYLVLGAILFAIAIVGIFL), 29 to 49 (IIIILMAIELMLLAVNTNFVA), and 61 to 81 (IFVFFVLTVAAAEAAIGLAIL).

It belongs to the complex I subunit 4L family. NDH-1 is composed of 14 different subunits. Subunits NuoA, H, J, K, L, M, N constitute the membrane sector of the complex.

Its subcellular location is the cell inner membrane. The catalysed reaction is a quinone + NADH + 5 H(+)(in) = a quinol + NAD(+) + 4 H(+)(out). NDH-1 shuttles electrons from NADH, via FMN and iron-sulfur (Fe-S) centers, to quinones in the respiratory chain. The immediate electron acceptor for the enzyme in this species is believed to be ubiquinone. Couples the redox reaction to proton translocation (for every two electrons transferred, four hydrogen ions are translocated across the cytoplasmic membrane), and thus conserves the redox energy in a proton gradient. This chain is NADH-quinone oxidoreductase subunit K, found in Burkholderia ambifaria (strain MC40-6).